Reading from the N-terminus, the 462-residue chain is 3beta-hydroxysteroid dehydrogenase/Delta(5)-Delta(4) isomerase 1 (462 aa).

Residues G51–L56, Y220, and K224 contribute to the NAD(+) site. K224 functions as the Proton donor in the catalytic mechanism. 2 consecutive transmembrane segments (helical) span residues V321–I341 and V428–W448.

This sequence belongs to the 3-beta-HSD family. As to expression, expressed exclusively in the neuron-like XXX(L/R) cells through all four larval stages and becomes fainter in adults.

The protein resides in the membrane. It carries out the reaction a 3beta-hydroxy-Delta(5)-steroid + NAD(+) = a 3-oxo-Delta(5)-steroid + NADH + H(+). The enzyme catalyses cholesterol + NAD(+) = cholest-5-en-3-one + NADH + H(+). It catalyses the reaction a 3-oxo-Delta(5)-steroid = a 3-oxo-Delta(4)-steroid. The catalysed reaction is cholest-5-en-3-one = cholest-4-en-3-one. It participates in steroid hormone biosynthesis; dafachronic acid biosynthesis. Functionally, hydroxysteroid dehydrogenase involved in the biosynthesis of dafrachonic acids. Catalyzes the dehydrogenation of cholesterol or its derivatives and the isomerization of the double carbon bond on the sterol ring. Modifies sterols into a Delta(4)-3-keto-sterols such as cholest-4-en-3-one, precursor of Delta(4)-dafachronic acid. Contributes to the production of Delta(7)-dafachronic acid in the XXX cells. Dafachronic acids act as ligands and bind directly to the nuclear hormone receptor (NHR) daf-12 suppressing dauer formation and inducing reproductive growth. Acts in parallel to AKT-1 to promote reproductive development via DAF-16/FoxO and DAF-12. The protein is 3beta-hydroxysteroid dehydrogenase/Delta(5)-Delta(4) isomerase 1 of Caenorhabditis elegans.